Reading from the N-terminus, the 1413-residue chain is DNA-directed RNA polymerase subunit beta' (1413 aa).

The Zn(2+) site is built by Cys72, Cys74, Cys87, and Cys90. Mg(2+)-binding residues include Asp463, Asp465, and Asp467. Zn(2+) contacts are provided by Cys811, Cys885, Cys892, and Cys895.

The protein belongs to the RNA polymerase beta' chain family. As to quaternary structure, the RNAP catalytic core consists of 2 alpha, 1 beta, 1 beta' and 1 omega subunit. When a sigma factor is associated with the core the holoenzyme is formed, which can initiate transcription. Mg(2+) is required as a cofactor. It depends on Zn(2+) as a cofactor.

The enzyme catalyses RNA(n) + a ribonucleoside 5'-triphosphate = RNA(n+1) + diphosphate. In terms of biological role, DNA-dependent RNA polymerase catalyzes the transcription of DNA into RNA using the four ribonucleoside triphosphates as substrates. This is DNA-directed RNA polymerase subunit beta' from Ruegeria pomeroyi (strain ATCC 700808 / DSM 15171 / DSS-3) (Silicibacter pomeroyi).